The sequence spans 1085 residues: Ankyrin repeat and IBR domain-containing protein 1 (1085 aa).

Glycine 2 carries N-myristoyl glycine lipidation. ANK repeat units lie at residues 45-75 (QHNT…NPNK) and 145-174 (KKNT…DLFA). Residues 282–322 (CQRSGVQMPTPPPSGYNAWDTLPSPRTPRTTRSSVTSPDEI) form a disordered region. Residues 304–319 (PSPRTPRTTRSSVTSP) are compositionally biased toward low complexity. Residues 330–570 (DTSLCDICMC…GGYYRCTRYE (241 aa)) are TRIAD supradomain. Zn(2+) is bound by residues cysteine 334, cysteine 337, cysteine 352, histidine 354, cysteine 357, cysteine 360, cysteine 379, cysteine 384, cysteine 466, cysteine 469, histidine 474, cysteine 479, cysteine 520, and cysteine 523. Residues 334–384 (CDICMCSISVFEDPVDMPCGHDFCRGCWEAFLNLKIQEGEAHNIFCPAYEC) form an RING-type 1 zinc finger. The segment at 402-479 (DKRYLQFDIK…LGEAHEPCDC (78 aa)) adopts an IBR-type zinc-finger fold. An RING-type 2; atypical zinc finger spans residues 520–549 (CANCKSPIQKNEGCNHMQCAKCKYDFCWIC). Cysteine 533 is a catalytic residue. The Zn(2+) site is built by cysteine 538, cysteine 541, cysteine 546, cysteine 549, histidine 556, and cysteine 566. Residues 576–641 (EEQSKEMTVE…RALKETEGGC (66 aa)) adopt a coiled-coil conformation. Residue serine 738 is modified to Phosphoserine. A disordered region spans residues 764–808 (RRRHRQQRRRGDVHSLLSNPTDLDEPSESTFDLPEGSSGRRPGAS). Residues 846 to 865 (EDDPNILLAIQLSLQESGLD) enclose the UIM domain. Phosphoserine is present on residues serine 879 and serine 906. Disordered regions lie at residues 884–907 (GSSL…ALSS), 921–959 (GADS…QDPS), and 1014–1085 (PPED…VHSV). Residues 926-959 (PFSTDTLSSRPLSETRSDFCPSSSDLDSAGQDPS) show a composition bias toward polar residues. The span at 1018–1033 (SVSKDTGVHEGERAQM) shows a compositional bias: basic and acidic residues. The span at 1068–1085 (ASQTPQTSSDWLEQVHSV) shows a compositional bias: polar residues.

Belongs to the RBR family.

It carries out the reaction [E2 ubiquitin-conjugating enzyme]-S-ubiquitinyl-L-cysteine + [acceptor protein]-L-lysine = [E2 ubiquitin-conjugating enzyme]-L-cysteine + [acceptor protein]-N(6)-ubiquitinyl-L-lysine.. Might act as an E3 ubiquitin-protein ligase, or as part of E3 complex, which accepts ubiquitin from specific E2 ubiquitin-conjugating enzymes and then transfers it to substrates. This chain is Ankyrin repeat and IBR domain-containing protein 1 (Ankib1), found in Mus musculus (Mouse).